A 1077-amino-acid polypeptide reads, in one-letter code: RNA polymerase-associated protein CTR9 (1077 aa).

16 TPR repeats span residues 56–89, 138–174, 183–216, 218–251, 298–332, 338–371, 373–405, 421–455, 462–495, 501–534, 540–572, 664–697, 699–731, 732–764, 768–801, and 830–863; these read KEHW…FQNS, IGNM…EDHR, CLFL…NPVL, PDPR…NPKN, PVLL…SPMI, SESS…NEDN, LAKL…NESL, FDAK…TLAT, SRAY…MEFI, LEVL…VSDK, ITLE…HPAY, GKKS…DPFN, FAAQ…LDNE, DVQL…FDNE, PHIL…AKTA, and AETL…FREL. Basic and acidic residues predominate over residues 959 to 980; that stretch reads EREAMAISEHNVKDDSDLSDKD. Residues 959 to 1077 form a disordered region; the sequence is EREAMAISEH…NDNDDNDGLF (119 aa). Phosphoserine is present on residues serine 1015 and serine 1017. Composition is skewed to acidic residues over residues 1042-1051 and 1063-1077; these read FIEDSDEEEA and DNDE…DGLF.

In terms of assembly, component of the PAF1 complex which consists of at least CDC73, CTR9, LEO1, PAF1 and RTF1. Interacts with SPT6. Interacts with FACT subunits POB3 and SPT16.

It localises to the nucleus. Its subcellular location is the nucleoplasm. The PAF1 complex is a multifunctional complex. Involved in transcription initiation via genetic interactions with TATA-binding proteins. Involved in elongation. It regulates 3'-end formation of snR47 by modulating the recruitment or stable association of NRD1 and NAB3 with RNA polymerase II. Also has a role in transcription-coupled histone modification. Required for activation of RAD6 ubiquitin conjugate and the BRE1 ubiquitin ligase which ubiquitinate 'Lys-126' histone H2B. Activates the SET1 histone methyltransferase complex for methylation of 'Lys-4' of histone H3 and for methylation of 'Lys-73' of histone H3 by DOT1 and 'Lys-36' of histone H3 by SET2. In complex with PAF1, required for normal CLN1 and CLN2 G1 cyclin expression in late G1. Also has a role in chromosome segregation where it appears to be involved in microtubule placement. This Saccharomyces cerevisiae (strain ATCC 204508 / S288c) (Baker's yeast) protein is RNA polymerase-associated protein CTR9 (CTR9).